The chain runs to 443 residues: Histidine--tRNA ligase (443 aa).

Residues 1–20 (MTESEKKQQKPQKAKAEKFK) show a composition bias toward basic and acidic residues. The disordered stretch occupies residues 1-21 (MTESEKKQQKPQKAKAEKFKA).

It belongs to the class-II aminoacyl-tRNA synthetase family. In terms of assembly, homodimer.

The protein localises to the cytoplasm. The enzyme catalyses tRNA(His) + L-histidine + ATP = L-histidyl-tRNA(His) + AMP + diphosphate + H(+). This is Histidine--tRNA ligase from Corynebacterium jeikeium (strain K411).